A 341-amino-acid polypeptide reads, in one-letter code: Phenylalanine--tRNA ligase alpha subunit (341 aa).

Mg(2+) is bound at residue Glu-256.

The protein belongs to the class-II aminoacyl-tRNA synthetase family. Phe-tRNA synthetase alpha subunit type 1 subfamily. As to quaternary structure, tetramer of two alpha and two beta subunits. Mg(2+) serves as cofactor.

The protein resides in the cytoplasm. The catalysed reaction is tRNA(Phe) + L-phenylalanine + ATP = L-phenylalanyl-tRNA(Phe) + AMP + diphosphate + H(+). The sequence is that of Phenylalanine--tRNA ligase alpha subunit from Chlamydia caviae (strain ATCC VR-813 / DSM 19441 / 03DC25 / GPIC) (Chlamydophila caviae).